Here is a 265-residue protein sequence, read N- to C-terminus: MQYGDKTTFKQSLAIQGRVINALLMREIITRYGRQNIGFFWLFVEPLLMTFFIVMMWKFIRADKFSTLNMIAFVMTGYPMAMMWRNASNRAIGSISANLSLLYHRNVRVLDTIFTRVLLEVAGASIAQILFMAILVMIDWIDAPHDVFYMLIAWFLMAMFAFALGLIICAIAQQFDVFGKIWGTLSFVLLPISGAFFFVHNLPAQAQSIALWFPMIHGTEMFRHGYFGDTVVTYESIGFLVVSDLALLLLGLVMVKNFSKGVEPQ.

Transmembrane regions (helical) follow at residues 37-57 (IGFFWLFVEPLLMTFFIVMMW), 64-84 (KFSTLNMIAFVMTGYPMAMMW), 118-138 (LLEVAGASIAQILFMAILVMI), 151-171 (LIAWFLMAMFAFALGLIICAI), 178-198 (FGKIWGTLSFVLLPISGAFFF), and 235-255 (ESIGFLVVSDLALLLLGLVMV). The ABC transmembrane type-2 domain occupies 37–258 (IGFFWLFVEP…LLGLVMVKNF (222 aa)).

This sequence belongs to the ABC-2 integral membrane protein family.

The protein resides in the cell inner membrane. In terms of biological role, may form an ATP-driven capsule polysaccharide export apparatus, in association with the BexA, BexC and BexD proteins. The polypeptide is Capsule polysaccharide export inner-membrane protein BexB (bexB) (Haemophilus influenzae).